The following is a 362-amino-acid chain: MIYDFRKKSKFGYTTGSCAAAGAYSALYYLKFGKKLSYVEIENLNGDKLIIPIEKIEKCGNKAKAVVIKDAGGDIDITNGIEIITEVELKKGKKDVIIKGGEGVGIVTKNGLQVKKGEPAINPKPREMIRNNLLKLLNDDEVVEVTISIPKGKELAKKTLNPKLGIVGGLSILGTTGIVRPMSNEAYMNSLAPQIDVALANGYKRLIFVPGNIGTKYAKQLLNANDDEIIEVSNFWGFMLDKAKEKGVEEILIFGHAGKIIKLAGGIYNTHSKVADCRNEILAAYSSLFIDDKEAIKKILYSNTTEEVIKILEEKGVLNDVFNFIAKRVVERLSERWKGIKFSCIIINMKGEVLGSYIWNKK.

It belongs to the CbiD family.

The enzyme catalyses Co-precorrin-5B + S-adenosyl-L-methionine = Co-precorrin-6A + S-adenosyl-L-homocysteine. It functions in the pathway cofactor biosynthesis; adenosylcobalamin biosynthesis; cob(II)yrinate a,c-diamide from sirohydrochlorin (anaerobic route): step 6/10. Functionally, catalyzes the methylation of C-1 in cobalt-precorrin-5B to form cobalt-precorrin-6A. This is Cobalt-precorrin-5B C(1)-methyltransferase from Methanocaldococcus jannaschii (strain ATCC 43067 / DSM 2661 / JAL-1 / JCM 10045 / NBRC 100440) (Methanococcus jannaschii).